The following is a 430-amino-acid chain: Trigger factor (430 aa).

The PPIase FKBP-type domain occupies 163–248; it reads GDIAVIDFEG…LNSLKRKNMP (86 aa).

The protein belongs to the FKBP-type PPIase family. Tig subfamily.

It is found in the cytoplasm. The catalysed reaction is [protein]-peptidylproline (omega=180) = [protein]-peptidylproline (omega=0). Involved in protein export. Acts as a chaperone by maintaining the newly synthesized protein in an open conformation. Functions as a peptidyl-prolyl cis-trans isomerase. The polypeptide is Trigger factor (Brevibacillus brevis (strain 47 / JCM 6285 / NBRC 100599)).